A 265-amino-acid polypeptide reads, in one-letter code: tRNA pseudouridine synthase A (265 aa).

Asp58 functions as the Nucleophile in the catalytic mechanism. Tyr116 contacts substrate.

It belongs to the tRNA pseudouridine synthase TruA family. In terms of assembly, homodimer.

The enzyme catalyses uridine(38/39/40) in tRNA = pseudouridine(38/39/40) in tRNA. Functionally, formation of pseudouridine at positions 38, 39 and 40 in the anticodon stem and loop of transfer RNAs. The polypeptide is tRNA pseudouridine synthase A (Neisseria gonorrhoeae (strain NCCP11945)).